The chain runs to 420 residues: ATP phosphoribosyltransferase regulatory subunit (420 aa).

This sequence belongs to the class-II aminoacyl-tRNA synthetase family. HisZ subfamily. As to quaternary structure, heteromultimer composed of HisG and HisZ subunits.

The protein resides in the cytoplasm. Its pathway is amino-acid biosynthesis; L-histidine biosynthesis; L-histidine from 5-phospho-alpha-D-ribose 1-diphosphate: step 1/9. In terms of biological role, required for the first step of histidine biosynthesis. May allow the feedback regulation of ATP phosphoribosyltransferase activity by histidine. The sequence is that of ATP phosphoribosyltransferase regulatory subunit from Bacillus cereus (strain B4264).